We begin with the raw amino-acid sequence, 336 residues long: Nuclear envelope-associated protein 3 (336 aa).

2 coiled-coil regions span residues 14 to 87 and 128 to 261; these read LKDL…IRAS and VLSK…LKKK. A Bipartite nuclear localization signal motif is present at residues 240–261; the sequence is KTKELEDQVENQRRIDQELKKK. Residues 313–330 form a helical membrane-spanning segment; sequence LWDKSGFKIVVSMSMLIL.

As to quaternary structure, forms homomers and heteromers with NEAP1 and NEAP2. Interacts with SUN1 and SUN2.

Its subcellular location is the nucleus inner membrane. The protein resides in the nucleus. The protein localises to the nucleoplasm. This chain is Nuclear envelope-associated protein 3, found in Arabidopsis thaliana (Mouse-ear cress).